A 95-amino-acid chain; its full sequence is UPF0512 protein H (95 aa).

The protein belongs to the UPF0512 family.

The polypeptide is UPF0512 protein H (Dictyostelium discoideum (Social amoeba)).